We begin with the raw amino-acid sequence, 147 residues long: Hemoglobin subunit gamma-2 (147 aa).

The Globin domain maps to Asn-3 to His-147. At Thr-13 the chain carries Phosphothreonine. Residues Ser-45, Ser-51, and Ser-53 each carry the phosphoserine modification. N6-acetyllysine is present on Lys-60. Residue His-64 participates in heme b binding. An N6-acetyllysine modification is found at Lys-83. His-93 contributes to the heme b binding site. An S-nitrosocysteine modification is found at Cys-94. A phosphoserine mark is found at Ser-140 and Ser-144.

This sequence belongs to the globin family. As to quaternary structure, heterotetramer of two alpha chains and two gamma chains in fetal hemoglobin (Hb F). In terms of tissue distribution, red blood cells.

In terms of biological role, gamma chains make up the fetal hemoglobin F, in combination with alpha chains. The sequence is that of Hemoglobin subunit gamma-2 (HBG2) from Cebus albifrons (White-fronted capuchin).